The sequence spans 86 residues: Neurotoxin 8-related gene product 1/2/3 (86 aa).

Positions 1 to 19 (MNYLTMISLALLVMTGVES) are cleaved as a signal peptide. An LCN-type CS-alpha/beta domain is found at 22–84 (RDAYIADNKN…VPIKVPGKCN (63 aa)). 4 disulfides stabilise this stretch: Cys-32–Cys-83, Cys-36–Cys-56, Cys-42–Cys-66, and Cys-46–Cys-68. Residue Asn-84 is modified to Asparagine amide.

Belongs to the long (4 C-C) scorpion toxin superfamily. Sodium channel inhibitor family. Alpha subfamily. Expressed by the venom gland.

The protein localises to the secreted. In terms of biological role, binds voltage-dependently at site-3 of sodium channels (Nav) and inhibits the inactivation of the activated channels, thereby blocking neuronal transmission. This is Neurotoxin 8-related gene product 1/2/3 (NTVIIIrgp1) from Androctonus mauritanicus mauritanicus (Scorpion).